The primary structure comprises 142 residues: HTH-type transcriptional regulator LrpA1 (142 aa).

Residues 1 to 72 form the HTH asnC-type domain; that stretch reads MSTESTEERI…GQSIAMVGID (72 aa). The segment at residues 22–41 is a DNA-binding region (H-T-H motif); sequence YAAIAERADVSKPTVRKYID.

Transcription factor that regulates genes involved in amino acid metabolism. Represses the aspB3 gene, coding for an aspartate transaminase, in the presence of L-aspartate. Another target gene is the basal transcriptional regulator tfbB. Also binds its own promoter. This Halobacterium salinarum (strain ATCC 29341 / DSM 671 / R1) protein is HTH-type transcriptional regulator LrpA1 (lrpA1).